The following is a 194-amino-acid chain: dCTP deaminase (194 aa).

Residues Arg-110 to Arg-115, Asp-128, Val-136 to Glu-138, Tyr-171, Lys-178, and Gln-182 contribute to the dCTP site. The active-site Proton donor/acceptor is Glu-138.

Belongs to the dCTP deaminase family. As to quaternary structure, homotrimer.

The catalysed reaction is dCTP + H2O + H(+) = dUTP + NH4(+). Its pathway is pyrimidine metabolism; dUMP biosynthesis; dUMP from dCTP (dUTP route): step 1/2. Functionally, catalyzes the deamination of dCTP to dUTP. This is dCTP deaminase from Psychromonas ingrahamii (strain DSM 17664 / CCUG 51855 / 37).